A 558-amino-acid polypeptide reads, in one-letter code: Membrane protein insertase YidC (558 aa).

5 helical membrane-spanning segments follow: residues 3 to 23 (IKRT…FDNW), 364 to 384 (FVGN…AVFF), 438 to 458 (LPVV…LASV), 477 to 497 (PYFI…KLNP), and 508 to 528 (MMFM…GLVL).

It belongs to the OXA1/ALB3/YidC family. Type 1 subfamily. In terms of assembly, interacts with the Sec translocase complex via SecD. Specifically interacts with transmembrane segments of nascent integral membrane proteins during membrane integration.

It is found in the cell inner membrane. Its function is as follows. Required for the insertion and/or proper folding and/or complex formation of integral membrane proteins into the membrane. Involved in integration of membrane proteins that insert both dependently and independently of the Sec translocase complex, as well as at least some lipoproteins. Aids folding of multispanning membrane proteins. The chain is Membrane protein insertase YidC from Burkholderia mallei (strain NCTC 10247).